Consider the following 346-residue polypeptide: uncharacterized protein (346 aa).

A signal peptide spans 1 to 27 (MKFNKISLSVSTALLAAGLAVSGSANA).

This is an uncharacterized protein from Haemophilus influenzae (strain ATCC 51907 / DSM 11121 / KW20 / Rd).